A 113-amino-acid chain; its full sequence is Large ribosomal subunit protein P1 (113 aa).

Residues 56–66 (TAAAAPAPAAG) show a composition bias toward low complexity. Residues 56-113 (TAAAAPAPAAGGSAGGEVEAADDDDEEDAEEEAADEGGDDDGDDDEEADGEGLGALFG) are disordered. Residues 74-105 (EAADDDDEEDAEEEAADEGGDDDGDDDEEADG) show a composition bias toward acidic residues.

It belongs to the eukaryotic ribosomal protein P1/P2 family. Part of the 50S ribosomal subunit. Homodimer, it forms part of the ribosomal stalk which helps the ribosome interact with GTP-bound translation factors. Forms a heptameric uL10/P0(P1)2(P1)2(P1)2 complex, where uL10/P0 forms an elongated spine to which the P1 dimers bind in a sequential fashion.

Its function is as follows. Forms part of the ribosomal stalk, playing a central role in the interaction of the ribosome with GTP-bound translation factors. This Haloferax volcanii (strain ATCC 29605 / DSM 3757 / JCM 8879 / NBRC 14742 / NCIMB 2012 / VKM B-1768 / DS2) (Halobacterium volcanii) protein is Large ribosomal subunit protein P1.